The primary structure comprises 275 residues: Large ribosomal subunit protein uL2cz (275 aa).

2 disordered regions span residues M1–V22 and N226–K275.

This sequence belongs to the universal ribosomal protein uL2 family. Part of the 50S ribosomal subunit.

It is found in the plastid. The protein resides in the chloroplast. This Chloranthus spicatus (Chulantree) protein is Large ribosomal subunit protein uL2cz (rpl2-A).